We begin with the raw amino-acid sequence, 149 residues long: Nucleoside diphosphate kinase (149 aa).

ATP-binding residues include Lys-9, Phe-57, Arg-85, Thr-91, Arg-102, and Asn-112. Catalysis depends on His-115, which acts as the Pros-phosphohistidine intermediate.

It belongs to the NDK family. As to quaternary structure, homotetramer. Mg(2+) is required as a cofactor.

Its subcellular location is the cytoplasm. The enzyme catalyses a 2'-deoxyribonucleoside 5'-diphosphate + ATP = a 2'-deoxyribonucleoside 5'-triphosphate + ADP. It carries out the reaction a ribonucleoside 5'-diphosphate + ATP = a ribonucleoside 5'-triphosphate + ADP. In terms of biological role, major role in the synthesis of nucleoside triphosphates other than ATP. The ATP gamma phosphate is transferred to the NDP beta phosphate via a ping-pong mechanism, using a phosphorylated active-site intermediate. In Trichodesmium erythraeum (strain IMS101), this protein is Nucleoside diphosphate kinase.